A 359-amino-acid chain; its full sequence is Acyl-CoA desaturase 3 (359 aa).

Positions 1 to 34 (MPGHLLQEEMTPSYTTTTTITAPPSGSLQNGREK) are disordered. Residues 1–72 (MPGHLLQEEM…EGPPPKLEYV (72 aa)) lie on the Cytoplasmic side of the membrane. Residues 11-27 (TPSYTTTTTITAPPSGS) show a composition bias toward low complexity. The helical transmembrane segment at 73–93 (WRNIILMALLHVGALYGITLV) threads the bilayer. Asparagine 75 is a binding site for substrate. Residues 94–97 (PSCK) are Lumenal-facing. Residues 98–118 (LYTCLFAFVYYVISIEGIGAG) form a helical membrane-spanning segment. At 119 to 217 (VHRLWSHRTY…EKLVMFQRRY (99 aa)) the chain is on the cytoplasmic side. Fe cation is bound by residues histidine 120 and histidine 125. Positions 120–125 (HRLWSH) match the Histidine box-1 motif. 3 residues coordinate substrate: asparagine 148, arginine 155, and aspartate 156. Residues histidine 157, histidine 160, and histidine 161 each coordinate Fe cation. The Histidine box-2 signature appears at 157 to 161 (HRAHH). Residues arginine 188 and lysine 189 each contribute to the substrate site. A Phosphoserine modification is found at serine 203. Residues 218–237 (YKPGILLMCFILPTLVPWYC) traverse the membrane as a helical segment. Residues 238-241 (WGET) are Lumenal-facing. A helical transmembrane segment spans residues 242-263 (FLNSFYVATLLRYAVVLNATWL). Residue tryptophan 262 coordinates substrate. The Cytoplasmic segment spans residues 264-359 (VNSAAHLYGY…RTGDGSHKSG (96 aa)). Fe cation-binding residues include histidine 269, histidine 298, histidine 301, and histidine 302. A Histidine box-3 motif is present at residues 298–302 (HNYHH).

This sequence belongs to the fatty acid desaturase type 1 family. Fe(2+) is required as a cofactor. As to expression, detected in skin, but at lower levels compared to Scd1. Detected in the middlle part of the sebaceous gland, but not in hair follicle. Not detected in liver and brain.

The protein localises to the endoplasmic reticulum membrane. The protein resides in the microsome membrane. The enzyme catalyses hexadecanoyl-CoA + 2 Fe(II)-[cytochrome b5] + O2 + 2 H(+) = (9Z)-hexadecenoyl-CoA + 2 Fe(III)-[cytochrome b5] + 2 H2O. Functionally, stearoyl-CoA desaturase that utilizes O(2) and electrons from reduced cytochrome b5 to introduce the first double bond into saturated fatty acyl-CoA substrates. Catalyzes the insertion of a cis double bond at the delta-9 position into fatty acyl-CoA substrates including palmitoyl-CoA. Has a strong preference for saturated fatty acids with chain lengths of 14 or 16 carbon atoms (C14:0 and C16:0), and has only very low activity with stearatate (C18:0). Required for the biosynthesis of membrane phospholipids, cholesterol esters and triglycerides. The protein is Acyl-CoA desaturase 3 of Mus musculus (Mouse).